We begin with the raw amino-acid sequence, 107 residues long: Putative double-stranded DNA mimic protein HSM_1473 (107 aa).

It belongs to the putative dsDNA mimic protein family.

In terms of biological role, may act as a double-stranded DNA (dsDNA) mimic. Probably regulates the activity of a dsDNA-binding protein. This is Putative double-stranded DNA mimic protein HSM_1473 from Histophilus somni (strain 2336) (Haemophilus somnus).